The sequence spans 764 residues: Tyrosine-protein phosphatase corkscrew (764 aa).

Residues 1-95 (WFHGNLSGKE…GTVVHLRQPF (95 aa)) enclose the SH2 domain. The Tyrosine-protein phosphatase domain maps to 117-522 (FWEEFESLQQ…KFVYYAVQHY (406 aa)). Residues 174–325 (IRLPTDGDLY…LNGEGNQFKT (152 aa)) are PTPase insert (Cys/Ser-rich). Positions 246–273 (SKHKRSESMSASANASAAGTGPGTPTAA) are disordered. Positions 255–273 (SASANASAAGTGPGTPTAA) are enriched in low complexity. Substrate contacts are provided by residues Asp422, 460-466 (CSAGIGR), and Gln507. Residue Cys460 is the Phosphocysteine intermediate of the active site. Residues 599–666 (AAKLQPPLPP…NANGNGNILG (68 aa)) are disordered. Residues 612-666 (SNNNNSSGNSGSYCNSSSSTSTAQHNGVVSSSNNCSSGSGSANSSNANGNGNILG) are compositionally biased toward low complexity.

It belongs to the protein-tyrosine phosphatase family. Non-receptor class subfamily.

The protein localises to the cytoplasm. The catalysed reaction is O-phospho-L-tyrosyl-[protein] + H2O = L-tyrosyl-[protein] + phosphate. In terms of biological role, required in all receptor tyrosine kinase signaling pathways. Functions downstream of the receptor tyrosine kinase torso, acting in concert with D-Raf via tailless. Also functions downstream of Egfr (epidermal growth factor receptor) and btl (fibroblast growth factor receptor). The SH2 domain suggests that csw effects its role by mediating heteromeric protein interactions. Maternally required for normal determination of cell fates at the termini of the embryo. Required for cell fate specification of the ventral ectoderm, in the developing embryonic CNS and for embryonic tracheal cell migration. Functions during imaginal development for proper formation of adult structures such as eyes, aristae, L5 wing vein and the tarsal claw. This Drosophila virilis (Fruit fly) protein is Tyrosine-protein phosphatase corkscrew (csw).